Reading from the N-terminus, the 134-residue chain is MAKEGTTVIGVPYYAGQNPYQAGIVPPNAIYGDPLGAPIQQTIYRDTPAPFNCLYCGNTGLTNLRSKPGVAAVVACMMPFMLGFCFLCPSMDCLWNKQHHCPQCGNKVADFEKSDPCLVMDPPQWKQPSFALPA.

Residues 33-113 (DPLGAPIQQT…CGNKVADFEK (81 aa)) form the LITAF domain. Zn(2+) is bound by residues Cys-53 and Cys-56. The membrane-binding amphipathic helix stretch occupies residues 68–88 (PGVAAVVACMMPFMLGFCFLC). 2 residues coordinate Zn(2+): Cys-101 and Cys-104.

This sequence belongs to the CDIP1/LITAF family. In terms of assembly, interacts (via N- and C-terminal) with MIEL1 and LSD1 (via N-terminus).

It is found in the cell membrane. In terms of biological role, acts as a membrane anchor, bringing other regulators of programmed cell death (PCD) to the plasma membrane. Negatively regulates hypersensitive cell death. The protein is GSH-induced LITAF domain protein of Arabidopsis thaliana (Mouse-ear cress).